A 61-amino-acid polypeptide reads, in one-letter code: Small ribosomal subunit protein uS14B (61 aa).

Zn(2+) contacts are provided by Cys-24, Cys-27, Cys-40, and Cys-43.

It belongs to the universal ribosomal protein uS14 family. Zinc-binding uS14 subfamily. As to quaternary structure, part of the 30S ribosomal subunit. Contacts proteins S3 and S10. Zn(2+) is required as a cofactor.

In terms of biological role, binds 16S rRNA, required for the assembly of 30S particles and may also be responsible for determining the conformation of the 16S rRNA at the A site. The sequence is that of Small ribosomal subunit protein uS14B from Myxococcus xanthus (strain DK1622).